The following is a 262-amino-acid chain: Tryptophan synthase alpha chain (262 aa).

Catalysis depends on proton acceptor residues Glu49 and Asp60.

Belongs to the TrpA family. As to quaternary structure, tetramer of two alpha and two beta chains.

The enzyme catalyses (1S,2R)-1-C-(indol-3-yl)glycerol 3-phosphate + L-serine = D-glyceraldehyde 3-phosphate + L-tryptophan + H2O. The protein operates within amino-acid biosynthesis; L-tryptophan biosynthesis; L-tryptophan from chorismate: step 5/5. In terms of biological role, the alpha subunit is responsible for the aldol cleavage of indoleglycerol phosphate to indole and glyceraldehyde 3-phosphate. The polypeptide is Tryptophan synthase alpha chain (Thermoanaerobacter pseudethanolicus (strain ATCC 33223 / 39E) (Clostridium thermohydrosulfuricum)).